The following is a 540-amino-acid chain: Glucose-6-phosphate isomerase (540 aa).

The active-site Proton donor is glutamate 346. Active-site residues include histidine 377 and lysine 505.

It belongs to the GPI family.

It is found in the cytoplasm. The enzyme catalyses alpha-D-glucose 6-phosphate = beta-D-fructose 6-phosphate. The protein operates within carbohydrate biosynthesis; gluconeogenesis. Its pathway is carbohydrate degradation; glycolysis; D-glyceraldehyde 3-phosphate and glycerone phosphate from D-glucose: step 2/4. In terms of biological role, catalyzes the reversible isomerization of glucose-6-phosphate to fructose-6-phosphate. This chain is Glucose-6-phosphate isomerase, found in Francisella philomiragia subsp. philomiragia (strain ATCC 25017 / CCUG 19701 / FSC 153 / O#319-036).